A 503-amino-acid chain; its full sequence is Cytochrome P450 7A1 (503 aa).

The chain crosses the membrane as a helical span at residues 4-24 (ISLIWGIAVLVSCCIWFIVGI). A heme-binding site is contributed by cysteine 444.

This sequence belongs to the cytochrome P450 family. It depends on heme as a cofactor. Detected in liver (at protein level). Liver.

Its subcellular location is the endoplasmic reticulum membrane. The protein localises to the microsome membrane. It carries out the reaction cholesterol + reduced [NADPH--hemoprotein reductase] + O2 = 7alpha-hydroxycholesterol + oxidized [NADPH--hemoprotein reductase] + H2O + H(+). It catalyses the reaction 4beta-hydroxycholesterol + reduced [NADPH--hemoprotein reductase] + O2 = 4beta,7alpha-dihydroxycholesterol + oxidized [NADPH--hemoprotein reductase] + H2O + H(+). The catalysed reaction is lathosterol + reduced [NADPH--hemoprotein reductase] + O2 = 7alpha,8alpha-epoxy-5alpha-cholestan-3beta-ol + oxidized [NADPH--hemoprotein reductase] + H2O + H(+). The enzyme catalyses lathosterol + reduced [NADPH--hemoprotein reductase] + O2 = 5alpha-cholestan-7-oxo-3beta-ol + oxidized [NADPH--hemoprotein reductase] + H2O + H(+). It carries out the reaction 7-dehydrocholesterol + reduced [NADPH--hemoprotein reductase] + O2 = 7-oxocholesterol + oxidized [NADPH--hemoprotein reductase] + H2O + H(+). It catalyses the reaction (24S)-hydroxycholesterol + reduced [NADPH--hemoprotein reductase] + O2 = (24S)-7alpha-dihydroxycholesterol + oxidized [NADPH--hemoprotein reductase] + H2O + H(+). The catalysed reaction is (24R)-hydroxycholesterol + reduced [NADPH--hemoprotein reductase] + O2 = (24R)-7alpha-dihydroxycholesterol + oxidized [NADPH--hemoprotein reductase] + H2O + H(+). It functions in the pathway lipid metabolism; bile acid biosynthesis. It participates in steroid metabolism; cholesterol degradation. Its function is as follows. A cytochrome P450 monooxygenase involved in the metabolism of endogenous cholesterol and its oxygenated derivatives (oxysterols). Mechanistically, uses molecular oxygen inserting one oxygen atom into a substrate, and reducing the second into a water molecule, with two electrons provided by NADPH via cytochrome P450 reductase (CPR; NADPH-ferrihemoprotein reductase). Functions as a critical regulatory enzyme of bile acid biosynthesis and cholesterol homeostasis. Catalyzes the hydroxylation of carbon hydrogen bond at 7-alpha position of cholesterol, a rate-limiting step in cholesterol catabolism and bile acid biosynthesis. 7-alpha hydroxylates several oxysterols, including 4beta-hydroxycholesterol and 24-hydroxycholesterol. Catalyzes the oxidation of the 7,8 double bond of 7-dehydrocholesterol and lathosterol with direct and predominant formation of the 7-keto derivatives. The protein is Cytochrome P450 7A1 (Cyp7a1) of Rattus norvegicus (Rat).